Reading from the N-terminus, the 315-residue chain is Taste receptor type 2 member 129 (315 aa).

Residues 1 to 9 (MDGIIQIIS) are Extracellular-facing. Residues 10-30 (AFIVIIEIIIGWFGNGFIVLV) traverse the membrane as a helical segment. The Cytoplasmic segment spans residues 31–46 (NCMHWIKRRRISTVNQ). A helical transmembrane segment spans residues 47-67 (ILTALAFSRIYLLLTVFTVIL). The Extracellular segment spans residues 68–101 (ASVQYSNILVTRREVKVIIFHLITSNHFSMWLAA). Residues 102–122 (CLGLFYFLKIANFSNFIFVFL) form a helical membrane-spanning segment. The Cytoplasmic portion of the chain corresponds to 123–128 (KKRVNK). The chain crosses the membrane as a helical span at residues 129 to 149 (VVSGTLLMSLVFLFLNTLLIN). Residues 150–185 (SYIDAQIDDYRGYLLYDFTSNITVSFYRVILVINNC) are Extracellular-facing. Asparagine 170 carries an N-linked (GlcNAc...) asparagine glycan. Residues 186–206 (IFTSIPFALSQSTFLMLIFSL) form a helical membrane-spanning segment. Residues 207–233 (WRHYKKMQQHAQRCRDTLTNAHIKVLQ) lie on the Cytoplasmic side of the membrane. The helical transmembrane segment at 234 to 254 (TMIMYVLLSAIFFLFLSMQIW) threads the bilayer. The Extracellular segment spans residues 255-266 (RNKLMENILFIR). A helical membrane pass occupies residues 267–287 (FCETVAAVFPSGHSCVLIWGD). Residues 288-315 (TNLRQTFLSVLWWLKHRFTLWVPKLYCR) are Cytoplasmic-facing.

Belongs to the G-protein coupled receptor T2R family.

It localises to the membrane. Putative taste receptor which may play a role in the perception of bitterness. The sequence is that of Taste receptor type 2 member 129 from Rattus norvegicus (Rat).